The chain runs to 104 residues: Large ribosomal subunit protein bL21 (104 aa).

The protein belongs to the bacterial ribosomal protein bL21 family. Part of the 50S ribosomal subunit. Contacts protein L20.

This protein binds to 23S rRNA in the presence of protein L20. This chain is Large ribosomal subunit protein bL21, found in Streptococcus pneumoniae serotype 2 (strain D39 / NCTC 7466).